Reading from the N-terminus, the 865-residue chain is AdoMet-dependent rRNA methyltransferase SPB1 (865 aa).

S-adenosyl-L-methionine-binding residues include G56, W58, D76, D92, and D117. The active-site Proton acceptor is the K157. Coiled-coil stretches lie at residues 358–400 (ESMD…VRMQ) and 462–492 (GETD…RKAA). Disordered stretches follow at residues 370–396 (LEKL…QKDI) and 443–676 (VVAS…TKDG). The segment covering 386 to 396 (RKENERKQKDI) has biased composition (basic and acidic residues). Positions 463 to 483 (ETDDESDEELDRLETELDDMY) are enriched in acidic residues. The span at 484 to 497 (DQFRERKAASDAKY) shows a compositional bias: basic and acidic residues. Acidic residues predominate over residues 526–545 (ISDDSELEEESSGDSDDEDD). Positions 556–566 (LDTTPSDNSGL) are enriched in polar residues. The span at 600–609 (GEDEDADMED) shows a compositional bias: acidic residues. Composition is skewed to basic and acidic residues over residues 610–627 (TVSK…ADKK) and 659–676 (KSGK…TKDG). The stretch at 762 to 789 (REAKGRKKMKAAQRLEKLKKKSDLLVNE) forms a coiled coil.

It belongs to the class I-like SAM-binding methyltransferase superfamily. RNA methyltransferase RlmE family. SPB1 subfamily. Component of the nucleolar and nucleoplasmic pre-60S ribosomal particle.

It localises to the nucleus. The protein localises to the nucleolus. It catalyses the reaction a ribonucleotide in rRNA + S-adenosyl-L-methionine = a 2'-O-methylribonucleotide in rRNA + S-adenosyl-L-homocysteine + H(+). Functionally, required for proper assembly of pre-ribosomal particles during the biogenesis of the 60S ribosomal subunit. This chain is AdoMet-dependent rRNA methyltransferase SPB1, found in Pyricularia oryzae (strain 70-15 / ATCC MYA-4617 / FGSC 8958) (Rice blast fungus).